A 169-amino-acid polypeptide reads, in one-letter code: Peptide deformylase (169 aa).

Fe cation contacts are provided by C91 and H133. Residue E134 is part of the active site. Residue H137 participates in Fe cation binding.

Belongs to the polypeptide deformylase family. Requires Fe(2+) as cofactor.

The catalysed reaction is N-terminal N-formyl-L-methionyl-[peptide] + H2O = N-terminal L-methionyl-[peptide] + formate. Removes the formyl group from the N-terminal Met of newly synthesized proteins. Requires at least a dipeptide for an efficient rate of reaction. N-terminal L-methionine is a prerequisite for activity but the enzyme has broad specificity at other positions. This chain is Peptide deformylase, found in Aliivibrio salmonicida (strain LFI1238) (Vibrio salmonicida (strain LFI1238)).